The sequence spans 735 residues: Transcription factor RFX4 (735 aa).

The interval 27–59 is disordered; the sequence is NKRYSSHTSLGNVSNDENEEKENNRASKPHSTP. The segment covering 32-41 has biased composition (polar residues); it reads SHTSLGNVSN. The DNA-binding element occupies 44–126; it reads NEEKENNRAS…RRLGTRGQSK (83 aa). Positions 61–136 form a DNA-binding region, RFX-type winged-helix; it reads TLQWLEENYE…YHYYGIAVKE (76 aa). Residues 315–487 form a necessary for dimerization region; that stretch reads RFSQILRRQT…NELMRAMKGE (173 aa). The segment at 501–538 is disordered; sequence EATPPTPSPGPSFSPAKSATSVEVPPPSSPVSNPSPEY.

Belongs to the RFX family. In terms of assembly, homodimer. Heterodimer with RFX2 and RFX3. Binds DNA. Interacts with GPS2. In terms of tissue distribution, isoform 1: Brain-specific. Isoform 2: Testis-specific. Isoform 1: Highly expressed in the suprachiasmatic nucleus, the central pacemaker site of the circadian clock (at protein level).

It is found in the nucleus. Its function is as follows. Transcription factor that plays a role in early brain development. May activate transcription by interacting directly with the X-box. May activate transcription from CX3CL1 promoter through the X-box during brain development. May be required for neural tube ciliogenesis during embryogenesis. The protein is Transcription factor RFX4 (Rfx4) of Mus musculus (Mouse).